A 365-amino-acid polypeptide reads, in one-letter code: Deoxyguanosinetriphosphate triphosphohydrolase-like protein (365 aa).

Positions 52 to 187 constitute an HD domain; it reads RLTHSIEVSQ…VDHADEIAYV (136 aa).

This sequence belongs to the dGTPase family. Type 2 subfamily.

This chain is Deoxyguanosinetriphosphate triphosphohydrolase-like protein, found in Wolinella succinogenes (strain ATCC 29543 / DSM 1740 / CCUG 13145 / JCM 31913 / LMG 7466 / NCTC 11488 / FDC 602W) (Vibrio succinogenes).